The chain runs to 65 residues: MDMNRVKQIVSSPADIPVYYNGVSVWIDGYDEENQMATVHLRDGRLNERRDVPVAELEEKGEAAH.

Belongs to the SspH family.

It localises to the spore core. In Geobacillus thermodenitrificans (strain NG80-2), this protein is Small, acid-soluble spore protein H 3.